We begin with the raw amino-acid sequence, 72 residues long: Hypotensin (72 aa).

A signal peptide spans 1-24 (MKMMIAVFVSILLLMFSLSSTAMG). 2 consecutive propeptides follow at residues 25-35 (METEQQNMEER) and 61-72 (RFDPATFGENED).

The protein belongs to the non-disulfide-bridged peptide (NDBP) superfamily. As to expression, expressed by the venom gland.

It localises to the secreted. Functionally, potentiates the hypotensive action of bradykinin (BK) in normotensive rats, and induces a vasorelaxant effect in mesenteric artery rings that is induced by endothelium-dependent release of nitric oxide (NO). Does not inhibit angiotensin converting enzyme (ACE). Shows neither hemolytic activity nor cytotoxicity to normal and cancer cells. Shows moderate antimicrobial activity against the fungi Candida albicans and the filamentous fungus Trichophyton rubrum, as well as against the bacteria C.albicans (MIC=128 ug/mL), C.tropicalis (MIC=128 ug/mL) and Aspergillus flavus (MIC=128 ug/mL). Has no antimicrobial activity against S.aureus, S.epidermidis and P.aeruginosa. The sequence is that of Hypotensin from Tityus stigmurus (Brazilian scorpion).